We begin with the raw amino-acid sequence, 164 residues long: C-phycoerythrin alpha chain (164 aa).

(2R,3E)-phycoerythrobilin-binding residues include cysteine 82 and cysteine 139.

The protein belongs to the phycobiliprotein family. In terms of assembly, heterodimer of an alpha and a beta chain. In terms of processing, contains two covalently linked bilin chromophores.

The protein localises to the cellular thylakoid membrane. In terms of biological role, light-harvesting photosynthetic bile pigment-protein from the phycobiliprotein complex. The chain is C-phycoerythrin alpha chain (cpeA) from Microchaete diplosiphon (Fremyella diplosiphon).